We begin with the raw amino-acid sequence, 514 residues long: DNA damage-binding protein CMR1 (514 aa).

Positions Asn-26 to Ser-116 are disordered. Residues Ile-34 to Thr-44 are compositionally biased toward basic and acidic residues. Basic residues predominate over residues Lys-45 to Ala-55. 2 stretches are compositionally biased toward basic and acidic residues: residues Val-56–Arg-65 and Lys-92–Ser-116. 7 WD repeats span residues Ile-180–Glu-221, Pro-229–Val-269, Asp-280–Lys-320, Leu-327–Ala-367, Ser-385–Asp-423, Gly-438–Leu-481, and Asp-483–Glu-514.

This sequence belongs to the WD repeat DDB2/WDR76 family.

Its function is as follows. DNA-binding protein that binds to both single- and double-stranded DNA. Binds preferentially to UV-damaged DNA. May be involved in DNA-metabolic processes. In Scheffersomyces stipitis (strain ATCC 58785 / CBS 6054 / NBRC 10063 / NRRL Y-11545) (Yeast), this protein is DNA damage-binding protein CMR1 (PRW1).